A 266-amino-acid chain; its full sequence is MSSSVGLDTIVSSLVKSSPPGELDGISQDLSAILSSKSNSSTVNTAIEKYINENSGVFSSTYIASKINKHESSTKYIDFIGKKLFNIDLHKQTAIDFEDYEPEVKYPAYFDELVKKLTEYGEDHYPSKYAFTIVPDGSDLQIIIIGQKLNYENFYTGLWKSHYKIKSGSIEGEAKLDIHYYEDGNVRLNFEESTSGTLSSSNASEIVNFINNAENEMTLKIVEDFNELNQKYFKNLRRLLPVTRSKINWGQAIGNYRLGSDVVHNK.

It belongs to the F-actin-capping protein alpha subunit family. Heterodimer of an alpha and a beta subunit.

Its subcellular location is the cytoplasm. The protein localises to the cytoskeleton. F-actin-capping proteins bind in a Ca(2+)-independent manner to the fast growing ends of actin filaments (barbed end) thereby blocking the exchange of subunits at these ends. Unlike other capping proteins (such as gelsolin and severin), these proteins do not sever actin filaments. The polypeptide is F-actin-capping protein subunit alpha (CAP1) (Debaryomyces hansenii (strain ATCC 36239 / CBS 767 / BCRC 21394 / JCM 1990 / NBRC 0083 / IGC 2968) (Yeast)).